A 128-amino-acid polypeptide reads, in one-letter code: Iron-sulfur cluster insertion protein ErpA (128 aa).

Iron-sulfur cluster is bound by residues cysteine 56, cysteine 120, and cysteine 122.

Belongs to the HesB/IscA family. As to quaternary structure, homodimer. The cofactor is iron-sulfur cluster.

Its function is as follows. Required for insertion of 4Fe-4S clusters for at least IspG. This Xanthomonas oryzae pv. oryzae (strain MAFF 311018) protein is Iron-sulfur cluster insertion protein ErpA.